A 146-amino-acid polypeptide reads, in one-letter code: Prefoldin subunit alpha (146 aa).

This sequence belongs to the prefoldin alpha subunit family. As to quaternary structure, heterohexamer of two alpha and four beta subunits.

It localises to the cytoplasm. Functionally, molecular chaperone capable of stabilizing a range of proteins. Seems to fulfill an ATP-independent, HSP70-like function in archaeal de novo protein folding. This Methanobrevibacter smithii (strain ATCC 35061 / DSM 861 / OCM 144 / PS) protein is Prefoldin subunit alpha.